A 243-amino-acid chain; its full sequence is Probable transcriptional regulatory protein LJ_0904 (243 aa).

The disordered stretch occupies residues 1–22 (MSGHSKWHNIQGRKNAQDAKRG).

It belongs to the TACO1 family.

Its subcellular location is the cytoplasm. The protein is Probable transcriptional regulatory protein LJ_0904 of Lactobacillus johnsonii (strain CNCM I-12250 / La1 / NCC 533).